A 440-amino-acid polypeptide reads, in one-letter code: Putative postmeiotic segregation increased 2-like protein 1 (440 aa).

Residues 164 to 178 are compositionally biased toward basic and acidic residues; the sequence is RVEHNVESSRWEPRR. Positions 164–215 are disordered; sequence RVEHNVESSRWEPRRRGACGSRGGNFPSPRGGSGVASLERAESSSTEPAKAI. Positions 230 to 364 constitute a Histidine kinase domain; that stretch reads PVVPSLSTAV…MTVSVKQLFS (135 aa).

Belongs to the DNA mismatch repair MutL/HexB family. In terms of tissue distribution, highly expressed in kidney, spleen, adrenal gland, ovary and cerebellum and to a lower extent in liver, esophagus, stomach, duodenum, colon, bladder, uterus, lung, pancreas and cerebrum. Not expressed in heart.

The polypeptide is Putative postmeiotic segregation increased 2-like protein 1 (PMS2P1) (Homo sapiens (Human)).